A 97-amino-acid polypeptide reads, in one-letter code: Large ribosomal subunit protein eL21 (97 aa).

Belongs to the eukaryotic ribosomal protein eL21 family.

This is Large ribosomal subunit protein eL21 from Methanococcus vannielii (strain ATCC 35089 / DSM 1224 / JCM 13029 / OCM 148 / SB).